A 478-amino-acid chain; its full sequence is Serine hydroxymethyltransferase (478 aa).

(6S)-5,6,7,8-tetrahydrofolate contacts are provided by residues leucine 161 and 165-167; that span reads GHL. Lysine 273 carries the N6-(pyridoxal phosphate)lysine modification. Glutamate 291 provides a ligand contact to (6S)-5,6,7,8-tetrahydrofolate.

Belongs to the SHMT family. In terms of assembly, homodimer. It depends on pyridoxal 5'-phosphate as a cofactor.

The protein localises to the cytoplasm. It carries out the reaction (6R)-5,10-methylene-5,6,7,8-tetrahydrofolate + glycine + H2O = (6S)-5,6,7,8-tetrahydrofolate + L-serine. It participates in one-carbon metabolism; tetrahydrofolate interconversion. Its pathway is amino-acid biosynthesis; glycine biosynthesis; glycine from L-serine: step 1/1. Functionally, catalyzes the reversible interconversion of serine and glycine with tetrahydrofolate (THF) serving as the one-carbon carrier. This reaction serves as the major source of one-carbon groups required for the biosynthesis of purines, thymidylate, methionine, and other important biomolecules. Also exhibits THF-independent aldolase activity toward beta-hydroxyamino acids, producing glycine and aldehydes, via a retro-aldol mechanism. The protein is Serine hydroxymethyltransferase of Salinispora tropica (strain ATCC BAA-916 / DSM 44818 / JCM 13857 / NBRC 105044 / CNB-440).